Here is a 440-residue protein sequence, read N- to C-terminus: Mitochondrial translation factor 2 (440 aa).

The transit peptide at 1-15 (MIRTSSILKNCNYRY) directs the protein to the mitochondrion.

It is found in the mitochondrion matrix. Required for the processing and/or for the stability of the CYTB and COX1 intron-containing pre-mRNAs and of the ATP6 transcript. Could be a stem-loop RNA-binding protein that plays a role in determining RNA stability. This chain is Mitochondrial translation factor 2 (MTF2), found in Saccharomyces cerevisiae (strain ATCC 204508 / S288c) (Baker's yeast).